A 94-amino-acid polypeptide reads, in one-letter code: Phosphoribosyl-ATP pyrophosphatase (94 aa).

The protein belongs to the PRA-PH family.

The protein localises to the cytoplasm. The catalysed reaction is 1-(5-phospho-beta-D-ribosyl)-ATP + H2O = 1-(5-phospho-beta-D-ribosyl)-5'-AMP + diphosphate + H(+). It participates in amino-acid biosynthesis; L-histidine biosynthesis; L-histidine from 5-phospho-alpha-D-ribose 1-diphosphate: step 2/9. The polypeptide is Phosphoribosyl-ATP pyrophosphatase (Pyrobaculum neutrophilum (strain DSM 2338 / JCM 9278 / NBRC 100436 / V24Sta) (Thermoproteus neutrophilus)).